The primary structure comprises 264 residues: NADH dehydrogenase [ubiquinone] iron-sulfur protein 3, mitochondrial (264 aa).

Residues 1–36 (MAAAAVARLWWRGILGASALTRGTGRPSVLLLPVRR) constitute a mitochondrion transit peptide.

Belongs to the complex I 30 kDa subunit family. Core subunit of respiratory chain NADH dehydrogenase (Complex I) which is composed of 45 different subunits. Interacts with NDUFAF3. Interacts with RAB5IF. Found in subcomplexes containing subunits NDUFS2, MT-ND1 and NDUFA13.

It localises to the mitochondrion inner membrane. It carries out the reaction a ubiquinone + NADH + 5 H(+)(in) = a ubiquinol + NAD(+) + 4 H(+)(out). Its function is as follows. Core subunit of the mitochondrial membrane respiratory chain NADH dehydrogenase (Complex I) which catalyzes electron transfer from NADH through the respiratory chain, using ubiquinone as an electron acceptor. Essential for the catalytic activity and assembly of complex I. This chain is NADH dehydrogenase [ubiquinone] iron-sulfur protein 3, mitochondrial (NDUFS3), found in Homo sapiens (Human).